The following is a 418-amino-acid chain: Sialidase-3 (418 aa).

The short motif at 24-27 (YRIP) is the FRIP motif element. The substrate site is built by Arg-25 and Arg-45. Residue Asp-50 is the Proton acceptor of the active site. The BNR 1 repeat unit spans residues 129-140 (LYSEDSGCSWGE). The substrate site is built by Tyr-179 and Tyr-181. The stretch at 201-212 (FYSDDLGVTWHC) is one BNR 2 repeat. Substrate contacts are provided by Glu-223 and Arg-243. The BNR 3 repeat unit spans residues 252-263 (AFSTDSGDCFQK). Arg-339 is a binding site for substrate. The active-site Nucleophile is Tyr-369. The active site involves Glu-386.

Belongs to the glycosyl hydrolase 33 family. As to quaternary structure, interacts with CAV1; this interaction enhances NEU3 sialidase activity within caveola. Interacts with EGFR; this interaction mediates desialylation of EGFR enhancing downstream signaling. Palmitoylated; may regulate intracellular trafficking and anchorage to plasma membrane and endomembranes. As to expression, expressed in brain, cardiac muscle and weakly in liver.

It is found in the cell membrane. The protein localises to the membrane. Its subcellular location is the caveola. It localises to the early endosome membrane. The protein resides in the recycling endosome membrane. It is found in the lysosome membrane. The catalysed reaction is Hydrolysis of alpha-(2-&gt;3)-, alpha-(2-&gt;6)-, alpha-(2-&gt;8)- glycosidic linkages of terminal sialic acid residues in oligosaccharides, glycoproteins, glycolipids, colominic acid and synthetic substrates.. It carries out the reaction a ganglioside GD1a + H2O = a ganglioside GM1 + N-acetylneuraminate. It catalyses the reaction a ganglioside GD1a (d18:1(4E)) + H2O = a ganglioside GM1 (d18:1(4E)) + N-acetylneuraminate. The enzyme catalyses a ganglioside GD1b + H2O = a ganglioside GM1 + N-acetylneuraminate. The catalysed reaction is a ganglioside GD1b (d18:1(4E)) + H2O = a ganglioside GM1 (d18:1(4E)) + N-acetylneuraminate. It carries out the reaction a ganglioside GD3 + H2O = a ganglioside GM3 + N-acetylneuraminate. It catalyses the reaction a ganglioside GD3 (d18:1(4E)) + H2O = a ganglioside GM3 (d18:1(4E)) + N-acetylneuraminate. The enzyme catalyses a ganglioside GM3 + H2O = a beta-D-galactosyl-(1-&gt;4)-beta-D-glucosyl-(1&lt;-&gt;1)-ceramide + N-acetylneuraminate. The catalysed reaction is a ganglioside GM1 + H2O = a ganglioside GA1 + N-acetylneuraminate. It carries out the reaction a ganglioside GM1 (d18:1(4E)) + H2O = a ganglioside GA1 (d18:1(4E)) + N-acetylneuraminate. It catalyses the reaction a ganglioside GM2 (d18:1(4E)) + H2O = a ganglioside GA2 (d18:1(4E)) + N-acetylneuraminate. The enzyme catalyses a ganglioside GM3 (d18:1(4E)) + H2O = a beta-D-Gal-(1-&gt;4)-beta-D-Glc-(1&lt;-&gt;1)-Cer(d18:1(4E)) + N-acetylneuraminate. The catalysed reaction is a ganglioside GT1b + H2O = a ganglioside GD1b + N-acetylneuraminate. Exo-alpha-sialidase that catalyzes the hydrolytic cleavage of the terminal sialic acid (N-acetylneuraminic acid, Neu5Ac) of a glycan moiety in the catabolism of glycolipids, glycoproteins and oligosacharides. Displays high catalytic efficiency for gangliosides including alpha-(2-&gt;3)-sialylated GD1a and GM3 and alpha-(2-&gt;8)-sialylated GD3. Plays a role in the regulation of transmembrane signaling through the modulation of ganglioside content of the lipid bilayer and by direct interaction with signaling receptors, such as EGFR. Desialylates EGFR and activates downstream signaling in proliferating cells. Contributes to clathrin-mediated endocytosis by regulating sorting of endocytosed receptors to early and recycling endosomes. The sequence is that of Sialidase-3 (Neu3) from Rattus norvegicus (Rat).